We begin with the raw amino-acid sequence, 55 residues long: MFNMALVFFLIAVLAGILGFAGIAGTLAWAAKVLFFAGLILTVVFYLLGKRTPPV.

2 helical membrane-spanning segments follow: residues 4–24 (MALV…AGIA) and 27–47 (LAWA…VFYL).

The protein belongs to the UPF0391 family.

Its subcellular location is the cell membrane. The polypeptide is UPF0391 membrane protein NE1120 (Nitrosomonas europaea (strain ATCC 19718 / CIP 103999 / KCTC 2705 / NBRC 14298)).